The sequence spans 333 residues: MTDQAFVTLTTNDAYAKGALVLGSSLKQHRTSRRLAVLTTPQVSDTMRKALEIVFDEVITVDILDSGDSAHLTLMKRPELGVTLTKLHCWSLTQYSKCVFMDADTLVLANIDDLFEREELSAAPDPGWPDCFNSGVFVYQPSVETYNQLLHVASEQGSFDGGDQGLLNTFFNSWATTDIRKHLPFIYNLSSISIYSYLPAFKAFGANAKVVHFLGQTKPWNYTYDTKTKSVRSEGHDPTMTHPQFLNVWWDIFTTSVVPLLQQFGLVQDTCSYQHVEDVSGAVSHLSLGETPATTQPFVSSEERKERWEQGQADYMGADSFDNIKKKLDTYLQ.

Thr-2 carries the N-acetylthreonine modification. Residues Leu-9, Thr-11, Asn-12, and Tyr-15 each coordinate UDP. UDP-alpha-D-glucose is bound by residues Leu-9, Thr-11, Asn-12, and Tyr-15. Ser-44 is subject to Phosphoserine; by PKA; in vitro. Arg-77 is a UDP binding site. Residues Arg-77, Lys-86, Asp-102, Ala-103, Asp-104, Asn-133, Ser-134, Asp-160, Asp-163, and Gln-164 each coordinate UDP-alpha-D-glucose. UDP contacts are provided by Asp-102, Ala-103, and Asp-104. Asp-102 provides a ligand contact to Mn(2+). Asp-104 serves as a coordination point for Mn(2+). A glycan (O-linked (Glc...) tyrosine) is linked at Tyr-195. His-212, Gly-215, and Lys-218 together coordinate UDP. His-212 is a Mn(2+) binding site. UDP-alpha-D-glucose contacts are provided by Gly-215 and Lys-218. Residues 284–316 are interaction with GYS1; the sequence is SHLSLGETPATTQPFVSSEERKERWEQGQADYM.

This sequence belongs to the glycosyltransferase 8 family. Glycogenin subfamily. Part of the GYS1-GYG1 complex, a heterooctamer composed of a tetramer of GYS1 and 2 dimers of GYG1, where each GYS1 protomer binds to one GYG1 subunit (via GYG1 C-terminus); the GYS1 tetramer may dissociate from GYG1 dimers to continue glycogen polymerization on its own. May also form a heterooctamer complex with GYS2 (via GYG1 C-terminus). Mn(2+) is required as a cofactor. Self-glycosylated by the transfer of glucose residues from UDP-glucose to itself, forming an alpha-1,4-glycan of around 10 residues attached to Tyr-195. In terms of processing, phosphorylated. In terms of tissue distribution, detected in heart, skeletal muscle, brain and testis, and at lower levels in kidney.

The protein localises to the cytoplasm. Its subcellular location is the nucleus. The catalysed reaction is L-tyrosyl-[glycogenin] + UDP-alpha-D-glucose = alpha-D-glucosyl-L-tyrosyl-[glycogenin] + UDP + H(+). It catalyses the reaction [1,4-alpha-D-glucosyl](n)-L-tyrosyl-[glycogenin] + UDP-alpha-D-glucose = [1,4-alpha-D-glucosyl](n+1)-L-tyrosyl-[glycogenin] + UDP + H(+). Its pathway is glycan biosynthesis; glycogen biosynthesis. Functionally, glycogenin participates in the glycogen biosynthetic process along with glycogen synthase and glycogen branching enzyme. It catalyzes the formation of a short alpha (1,4)-glucosyl chain covalently attached via a glucose 1-O-tyrosyl linkage to internal tyrosine residues and these chains act as primers for the elongation reaction catalyzed by glycogen synthase. The polypeptide is Glycogenin-1 (GYG1) (Oryctolagus cuniculus (Rabbit)).